We begin with the raw amino-acid sequence, 309 residues long: Tagatose-6-phosphate kinase (309 aa).

This sequence belongs to the carbohydrate kinase PfkB family. LacC subfamily.

The catalysed reaction is D-tagatofuranose 6-phosphate + ATP = D-tagatofuranose 1,6-bisphosphate + ADP + H(+). Its pathway is carbohydrate metabolism; D-tagatose 6-phosphate degradation; D-glyceraldehyde 3-phosphate and glycerone phosphate from D-tagatose 6-phosphate: step 1/2. The protein is Tagatose-6-phosphate kinase of Streptococcus pneumoniae (strain Taiwan19F-14).